Reading from the N-terminus, the 549-residue chain is Cytoplasmic trehalase (549 aa).

Residues Arg168, Trp175–Asp176, Asn212, Arg221–Gln223, Arg292–Glu294, and Gly324 contribute to the substrate site. Residues Asp326 and Glu509 each act as proton donor/acceptor in the active site. Glu525 contacts substrate.

The protein belongs to the glycosyl hydrolase 37 family. In terms of assembly, monomer.

It is found in the cytoplasm. The enzyme catalyses alpha,alpha-trehalose + H2O = alpha-D-glucose + beta-D-glucose. It functions in the pathway glycan degradation; trehalose degradation; D-glucose from alpha,alpha-trehalose: step 1/1. In terms of biological role, hydrolyzes trehalose to glucose. Could be involved, in cells returning to low osmolarity conditions, in the utilization of the accumulated cytoplasmic trehalose, which was synthesized in response to high osmolarity. This Salmonella schwarzengrund (strain CVM19633) protein is Cytoplasmic trehalase.